The following is a 257-amino-acid chain: Phycoerythrobilin:ferredoxin oxidoreductase (257 aa).

It belongs to the HY2 family.

The enzyme catalyses (3Z)-phycoerythrobilin + oxidized 2[4Fe-4S]-[ferredoxin] = 15,16-dihydrobiliverdin + reduced 2[4Fe-4S]-[ferredoxin] + 2 H(+). In terms of biological role, catalyzes the two-electron reduction of the C2 and C3(1) diene system of 15,16-dihydrobiliverdin. This Prochlorococcus marinus (strain MIT 9303) protein is Phycoerythrobilin:ferredoxin oxidoreductase.